The following is a 310-amino-acid chain: tRNA pseudouridine synthase B (310 aa).

The Nucleophile role is filled by Asp49.

Belongs to the pseudouridine synthase TruB family. Type 1 subfamily.

It catalyses the reaction uridine(55) in tRNA = pseudouridine(55) in tRNA. In terms of biological role, responsible for synthesis of pseudouridine from uracil-55 in the psi GC loop of transfer RNAs. The sequence is that of tRNA pseudouridine synthase B from Idiomarina loihiensis (strain ATCC BAA-735 / DSM 15497 / L2-TR).